Reading from the N-terminus, the 433-residue chain is uncharacterized protein (433 aa).

The chain crosses the membrane as a helical span at residues 36–58 (YYYYVQLAFKMLVGVLKNLPVVY). The tract at residues 169–433 (VRVPSRDLQP…GEGRDLPEDN (265 aa)) is disordered. 2 stretches are compositionally biased toward acidic residues: residues 216–227 (GEPGENGDESDE) and 234–254 (GDED…YESD). 3 stretches are compositionally biased toward basic and acidic residues: residues 265-280 (EPDR…RGSE), 354-364 (GGRRPARRDSP), and 422-433 (RRGEGRDLPEDN).

The protein localises to the host membrane. This is an uncharacterized protein from Psittacid herpesvirus 1 (isolate Amazon parrot/-/97-0001/1997) (PsHV-1).